A 288-amino-acid chain; its full sequence is Proteasome subunit beta (288 aa).

Residues 1–60 (MESNADWGSRGGLPQAFLTPGISSFSEFLKGFAPEYLPSGRPLPGGLGSASAAGDIAPHG) constitute a propeptide, removed in mature form; by autocatalysis. Thr61 acts as the Nucleophile in catalysis.

The protein belongs to the peptidase T1B family. In terms of assembly, the 20S proteasome core is composed of 14 alpha and 14 beta subunits that assemble into four stacked heptameric rings, resulting in a barrel-shaped structure. The two inner rings, each composed of seven catalytic beta subunits, are sandwiched by two outer rings, each composed of seven alpha subunits. The catalytic chamber with the active sites is on the inside of the barrel. Has a gated structure, the ends of the cylinder being occluded by the N-termini of the alpha-subunits. Is capped by the proteasome-associated ATPase, ARC.

It is found in the cytoplasm. It carries out the reaction Cleavage of peptide bonds with very broad specificity.. The protein operates within protein degradation; proteasomal Pup-dependent pathway. With respect to regulation, the formation of the proteasomal ATPase ARC-20S proteasome complex, likely via the docking of the C-termini of ARC into the intersubunit pockets in the alpha-rings, may trigger opening of the gate for substrate entry. Interconversion between the open-gate and close-gate conformations leads to a dynamic regulation of the 20S proteasome proteolysis activity. Component of the proteasome core, a large protease complex with broad specificity involved in protein degradation. The chain is Proteasome subunit beta from Catenulispora acidiphila (strain DSM 44928 / JCM 14897 / NBRC 102108 / NRRL B-24433 / ID139908).